We begin with the raw amino-acid sequence, 1203 residues long: Nitric oxide synthase 3 (1203 aa).

The interval 1-71 (MGNLKSVAQE…PPEGPKFPRV (71 aa)) is disordered. Glycine 2 carries the N-myristoyl glycine lipid modification. Residues cysteine 15 and cysteine 26 are each lipidated (S-palmitoyl cysteine). Positions 15–27 (CGLGLGLGLGLCG) are enriched in gly residues. Residue threonine 33 is modified to Phosphothreonine. Residues 33 to 66 (TPAPEPSRAPASLLPPAPEHSPPSSPLTQPPEGP) show a composition bias toward pro residues. Residues cysteine 94 and cysteine 99 each contribute to the Zn(2+) site. Positions 98–486 (RCLGSLVFPR…PDPWKGSAAK (389 aa)) are interaction with NOSIP. Residue serine 102 participates in (6R)-L-erythro-5,6,7,8-tetrahydrobiopterin binding. Serine 114 carries the phosphoserine; by CDK5 modification. Position 184 (cysteine 184) interacts with heme b. The L-arginine site is built by glutamine 247, tryptophan 356, tyrosine 357, and glutamate 361. Arginine 365 contributes to the (6R)-L-erythro-5,6,7,8-tetrahydrobiopterin binding site. An L-arginine-binding site is contributed by asparagine 366. (6R)-L-erythro-5,6,7,8-tetrahydrobiopterin is bound by residues alanine 446, tryptophan 447, and phenylalanine 460. Residue tyrosine 475 coordinates heme b. The interval 491–510 (TRKKTFKEVANAVKISASLM) is calmodulin-binding. Threonine 495 bears the Phosphothreonine; by AMPK mark. The 184-residue stretch at 520-703 (ATILYGSETG…AFRGWAQAAF (184 aa)) folds into the Flavodoxin-like domain. FMN is bound by residues serine 526, glutamate 527, threonine 528, arginine 530, serine 572, and threonine 573. Phosphoserine is present on residues serine 615, serine 633, and serine 638. FMN contacts are provided by serine 654, cysteine 661, glutamate 687, and glutamine 691. In terms of domain architecture, FAD-binding FR-type spans 756–1002 (RKMFQATIRS…IRGAPSFRLP (247 aa)). Arginine 776 contributes to the NADP(+) binding site. Residue histidine 798 participates in FAD binding. Phosphoserine is present on serine 836. Residues arginine 938, tyrosine 940, serine 941, threonine 956, alanine 958, tyrosine 962, valine 975, cysteine 976, and serine 977 each contribute to the FAD site. NADP(+)-binding residues include threonine 1016, arginine 1049, serine 1078, arginine 1079, lysine 1085, tyrosine 1087, and glutamine 1089. Threonine 1175 is subject to Phosphothreonine. Position 1177 is a phosphoserine; by AMPK (serine 1177). The residue at position 1179 (serine 1179) is a Phosphoserine.

The protein belongs to the NOS family. Homodimer. Interacts with NOSIP and NOSTRIN. Interacts with HSP90AB1. Forms a complex with ASL, ASS1 and SLC7A1; the complex regulates cell-autonomous L-arginine synthesis and citrulline recycling while channeling extracellular L-arginine to nitric oxide synthesis pathway. The cofactor is heme b. It depends on FAD as a cofactor. Requires FMN as cofactor. (6R)-L-erythro-5,6,7,8-tetrahydrobiopterin serves as cofactor. Post-translationally, phosphorylation by AMPK at Ser-1177 in the presence of Ca(2+)-calmodulin (CaM) activates activity. In absence of Ca(2+)-calmodulin, AMPK also phosphorylates Thr-495, resulting in inhibition of activity. Phosphorylation of Ser-114 by CDK5 reduces activity. As to expression, platelets, placenta, liver and kidney.

Its subcellular location is the cell membrane. The protein resides in the membrane. It localises to the caveola. The protein localises to the cytoplasm. It is found in the cytoskeleton. Its subcellular location is the golgi apparatus. It catalyses the reaction 2 L-arginine + 3 NADPH + 4 O2 + H(+) = 2 L-citrulline + 2 nitric oxide + 3 NADP(+) + 4 H2O. Its activity is regulated as follows. Stimulated by calcium/calmodulin. Inhibited by NOSIP and NOSTRIN. Its function is as follows. Produces nitric oxide (NO) which is implicated in vascular smooth muscle relaxation through a cGMP-mediated signal transduction pathway. NO mediates vascular endothelial growth factor (VEGF)-induced angiogenesis in coronary vessels and promotes blood clotting through the activation of platelets. Lacks eNOS activity, dominant-negative form that may down-regulate eNOS activity by forming heterodimers with isoform 1. This Homo sapiens (Human) protein is Nitric oxide synthase 3.